A 685-amino-acid polypeptide reads, in one-letter code: MLISSYNQVLVAFSLIVAILASYTALDMAGRVTLAKGREALSWLIGGAFAMGFGIWSMHFVGMLAFSLPIPLGYDLGLTLLSLLLAVGSSAFALWLVCQAELPWQRLALGALLMGSGIAAMHYTGMAALLMMPGIVYDPLWLGLSILIAVIASGAALWIAFRLRHGSRRIVLVRAGAALVMGCAIVGMHYTGMAAAQFPLGSFCGAAGRGIDNGWLAVLVIVITLAVIAIALIVSVLDSRLEARTSVLATSLARANRELIQLALHDNLTKLPNRMLLDDRLEQAIQQAIRDDRRFAVLFMDLDGFKAVNDAYGHHLGDLLLIEVAERIRANVRAQDTIARLGGDEFVLLIEAREPADAATLAEKLVKRISQPYQISRHEVRISASIGIALYPGDGQTRHELMINADAAMYHAKDQGRNGYCFFESSMNANAQEQLQLLHDLRQALERRQLVLHYQPKVLAPNGPMIGVEALLRWEHPQHGLITPGQFLPLAEKTGLIVQIGEWVLDEACRQMRLWLDGGHADWNIAVNLSALQFAHAGLVDSVRNALLRHSLEPSHLILEVTESTAMRDADASLVILEQLSAMGVGISIDDFGTGYSSLLYLKRLPASELKIDRGFINELAHDSDDAAIVSAIVALGRTLNLKIVAEGVETEAQQEFLTRLGCNSLQGFLLGRPMPAEQLLASVA.

The region spanning 6 to 199 is the MHYT domain; it reads YNQVLVAFSL…YTGMAAAQFP (194 aa). A run of 7 helical transmembrane segments spans residues 9-29, 44-64, 77-97, 117-137, 141-161, 175-195, and 214-234; these read VLVA…LDMA, LIGG…VGML, GLTL…LWLV, GIAA…GIVY, WLGL…WIAF, AGAA…GMAA, and GWLA…ALIV. Topologically, residues 235 to 685 are cytoplasmic; it reads SVLDSRLEAR…PAEQLLASVA (451 aa). Residues 293 to 425 enclose the GGDEF domain; that stretch reads RRFAVLFMDL…GRNGYCFFES (133 aa). The region spanning 434 to 685 is the EAL domain; that stretch reads QLQLLHDLRQ…PAEQLLASVA (252 aa). 3',3'-c-di-GMP is bound by residues Q455, E469, L472, R473, N528, and Q533. E469 contacts Mg(2+). N528 is a binding site for Mg(2+). 3 residues coordinate Mg(2+): E560, D590, and D591. A 3',3'-c-di-GMP-binding site is contributed by D590. R614 contributes to the 3',3'-c-di-GMP binding site. Mg(2+) is bound at residue E647. 2 residues coordinate 3',3'-c-di-GMP: E650 and F669.

Homodimer. It depends on Mg(2+) as a cofactor.

The protein resides in the cell inner membrane. It carries out the reaction 2 GTP = 3',3'-c-di-GMP + 2 diphosphate. The catalysed reaction is 3',3'-c-di-GMP + H2O = 5'-phosphoguanylyl(3'-&gt;5')guanosine + H(+). Functionally, displays both diguanylate cyclase (DGC) and c-di-GMP-specific phosphodiesterase (PDE) activity. Probably modulates DGC and PDE activities, and thus c-di-GMP levels, in a growth mode-dependent manner. May act as a PDE under planktonic growth conditions and as a DGC in biofilms. During biofilm formation, it specifically activates alginate biosynthesis via generation of a localized c-di-GMP pool in the vicinity of the alginate biosynthesis protein Alg44. The polypeptide is Bifunctional diguanylate cyclase/cyclic di-GMP phosphodiesterase MucR (Pseudomonas aeruginosa (strain ATCC 15692 / DSM 22644 / CIP 104116 / JCM 14847 / LMG 12228 / 1C / PRS 101 / PAO1)).